The sequence spans 627 residues: Putative ankyrin repeat protein L122 (627 aa).

12 ANK repeats span residues 61–94 (KGWT…DVHI), 98–130 (KGRT…DINS), 153–186 (HACY…DPNI), 190–223 (YGKT…NANH), 228–259 (AETV…DINH), 263–296 (IGFT…NINL), 300–333 (DGFT…DIND), 337–370 (NNVT…DLEI), 374–407 (YDWT…NVNV), 411–444 (LGHT…NPNL), 448–480 (DKNT…DSNT), and 491–523 (REYN…NYSD).

The chain is Putative ankyrin repeat protein L122 from Acanthamoeba polyphaga (Amoeba).